The sequence spans 194 residues: tRNA (mnm(5)s(2)U34)-methyltransferase (194 aa).

6 residues coordinate S-adenosyl-L-methionine: His33, Asp34, Asp52, Gln54, Ser79, and His80.

The protein belongs to the methyltransferase superfamily. MnmM family. Homodimer.

It carries out the reaction 5-aminomethyl-2-thiouridine(34) in tRNA + S-adenosyl-L-methionine = 5-methylaminomethyl-2-thiouridine(34) in tRNA + S-adenosyl-L-homocysteine + H(+). It functions in the pathway tRNA modification. Functionally, involved in the biosynthesis of 5-methylaminomethyl-2-thiouridine (mnm(5)s(2)U) at the wobble position (U34) in tRNA. Catalyzes the transfer of a methyl group from S-adenosyl-L-methionine to nm(5)s(2)U34 to form mnm(5)s(2)U34. This is tRNA (mnm(5)s(2)U34)-methyltransferase from Bacillus subtilis (strain 168).